The primary structure comprises 354 residues: G-protein coupled receptor homolog US28 (354 aa).

Over 1-37 (MTPTTTTAELTTEFDYDEDATPCVFTDVLNQSKPVTL) the chain is Extracellular. Residue Asn30 is glycosylated (N-linked (GlcNAc...) asparagine; by host). The helical transmembrane segment at 38 to 58 (FLYGVVFLFGSIGNFLVIFTI) threads the bilayer. The Cytoplasmic portion of the chain corresponds to 59–69 (TWRRRIQCSGD). A helical transmembrane segment spans residues 70 to 90 (VYFINLAAADLLFVCTLPLWM). Residues 91–101 (QYLLDHNSLAS) are Extracellular-facing. The chain crosses the membrane as a helical span at residues 102–122 (VPCTLLTACFYVAMFASLCFI). Topologically, residues 123–145 (TEIALDRYYAIVYMRYRPVKQAC) are cytoplasmic. Residues 146-166 (LFSIFWWIFAVIIAIPHFMVV) form a helical membrane-spanning segment. Residues 167 to 183 (TKKDNQCMTDYDYLEVS) are Extracellular-facing. The helical transmembrane segment at 184-204 (YPIILNVELMLGAFVIPLSVI) threads the bilayer. Residues 205-228 (SYCYYRISRIVAVSQSRHKGRIVR) are Cytoplasmic-facing. A helical transmembrane segment spans residues 229-249 (VLIAVVLVFIIFWLPYHLTLF). Residues 250-273 (VDTLKLLKWISSSCEFERSLKRAL) lie on the Extracellular side of the membrane. A helical transmembrane segment spans residues 274-294 (ILTESLAFCHCCLNPLLYVFV). Over 295–354 (GTKFRQELHCLLAEFRQRLFSRDVSWYHSMSFSRRSSPSRRETSSDTLSDEVCRVSQIIP) the chain is Cytoplasmic.

The protein belongs to the G-protein coupled receptor 1 family. In terms of assembly, interacts with host GPRASP1; this interaction targets US28 to lysosomes for degradation. Interacts with host CX3CL1/Fractalkine (via N-terminus). Interacts with host Gi alpha-1 subunit GNAI1; this interaction does not lead to the catalytic activation of Gi complex. In terms of processing, phosphorylated. High phosphorylation occurs concomitantly with receptor endocytosis and correlate with low receptor presence at the plasma membrane.

Its subcellular location is the host cell membrane. Functionally, binds to a great number of different CC-chemokines including CCL5/RANTES, CCL2/MCP-1, CCL3/MIP-1-alpha as well as CX3CL1/Fractalkine. Transduces signals resulting in the activation of MAP kinase signaling pathways and augmentation of intracellular calcium ion levels, leading to alterations in chemotactic behavior of vascular smooth muscle cells and macrophages. The US28 receptor also exhibits high levels of agonist-independent signaling activity and agonist-independent endocytosis. Interacts with the host Gi complex without activating it, thereby probably interfering with the chemokine-Gi signaling. May also function as a G protein sink to sequester G protein from the cell surface via internalization. Interacts with endogenous Gaq/11 subunits and thereby constitutively activates phospholipase C. This is G-protein coupled receptor homolog US28 (US28) from Homo sapiens (Human).